The chain runs to 116 residues: Ribonuclease P protein component (116 aa).

It belongs to the RnpA family. In terms of assembly, consists of a catalytic RNA component (M1 or rnpB) and a protein subunit.

The catalysed reaction is Endonucleolytic cleavage of RNA, removing 5'-extranucleotides from tRNA precursor.. Its function is as follows. RNaseP catalyzes the removal of the 5'-leader sequence from pre-tRNA to produce the mature 5'-terminus. It can also cleave other RNA substrates such as 4.5S RNA. The protein component plays an auxiliary but essential role in vivo by binding to the 5'-leader sequence and broadening the substrate specificity of the ribozyme. The protein is Ribonuclease P protein component of Pseudanabaena sp. (strain PCC 6903).